The following is a 142-amino-acid chain: Large ribosomal subunit protein uL13 (142 aa).

Belongs to the universal ribosomal protein uL13 family. As to quaternary structure, part of the 50S ribosomal subunit.

Its function is as follows. This protein is one of the early assembly proteins of the 50S ribosomal subunit, although it is not seen to bind rRNA by itself. It is important during the early stages of 50S assembly. The chain is Large ribosomal subunit protein uL13 from Francisella tularensis subsp. holarctica (strain FTNF002-00 / FTA).